Reading from the N-terminus, the 494-residue chain is Cysteine--tRNA ligase (494 aa).

Residue C29 participates in Zn(2+) binding. The short motif at 31–41 (VTVYDHCHIGH) is the 'HIGH' region element. The Zn(2+) site is built by C209, H234, and E238. A 'KMSKS' region motif is present at residues 266-270 (KMSKS). An ATP-binding site is contributed by K269.

This sequence belongs to the class-I aminoacyl-tRNA synthetase family. In terms of assembly, monomer. Requires Zn(2+) as cofactor.

It localises to the cytoplasm. The catalysed reaction is tRNA(Cys) + L-cysteine + ATP = L-cysteinyl-tRNA(Cys) + AMP + diphosphate. This is Cysteine--tRNA ligase from Geotalea daltonii (strain DSM 22248 / JCM 15807 / FRC-32) (Geobacter daltonii).